The following is an 803-amino-acid chain: Bromodomain-containing protein 2 (803 aa).

The residue at position 1 (M1) is an N-acetylmethionine. The tract at residues 1 to 28 (MLQNVTPHSKLPGEGNAGLLGLGPEAAA) is disordered. T6 is subject to Phosphothreonine. S37 is modified (phosphoserine). Residues 53 to 73 (ALQLTPANPPPPEVSNPKKPG) are disordered. One can recognise a Bromo 1 domain in the interval 74-180 (RVTNQLQYLH…KIFLQKVASM (107 aa)). A protein is bound by residues D112, Y155, N156, K157, D160, and D161. Disordered stretches follow at residues 268-349 (PPAQ…LSEQ), 456-653 (EPLE…RQLS), and 739-803 (EKRL…SDSG). Positions 285–298 (TTTPTPTAILAPGS) are enriched in low complexity. 3 positions are modified to phosphoserine: S298, S301, and S305. Residues 316–332 (MRRESGRPIKPPRKDLP) show a composition bias toward basic and acidic residues. The region spanning 344-453 (GKLSEQLKHC…DVFEFRYAKM (110 aa)) is the Bromo 2 domain. Residues 481–515 (SSEESSSESSSEEDEEEDEEEEEEEEESESSDSEE) show a composition bias toward acidic residues. The span at 545–567 (KPKRKREKKEKKKKRKAEKHRGR) shows a compositional bias: basic residues. The short motif at 556-560 (KKKRK) is the Nuclear localization signal element. The region spanning 634 to 716 (DSEEEEESRP…SCLRKKPRKP (83 aa)) is the NET domain. The residue at position 635 (S635) is a Phosphoserine. A compositionally biased stretch (basic and acidic residues) spans 641–652 (SRPMSYDEKRQL). Low complexity predominate over residues 777 to 797 (SASSSSSDSSSSSSSSSSSDT).

It belongs to the BET family. As to quaternary structure, homodimer. Interacts with E2F1. Interacts with (acetylated) STAT3; promoting STAT3 recruitment to chromatin. Interacts with CTCF; promoting BRD2 recruitment to chromatin.

The protein localises to the nucleus. The protein resides in the chromosome. Chromatin reader protein that specifically recognizes and binds histone H4 acetylated at 'Lys-5' and 'Lys-12' (H4K5ac and H4K12ac, respectively), thereby controlling gene expression and remodeling chromatin structures. Recruits transcription factors and coactivators to target gene sites, and activates RNA polymerase II machinery for transcriptional elongation. Plays a key role in genome compartmentalization via its association with CTCF and cohesin: recruited to chromatin by CTCF and promotes formation of topologically associating domains (TADs) via its ability to bind acetylated histones, contributing to CTCF boundary formation and enhancer insulation. Also recognizes and binds acetylated non-histone proteins, such as STAT3. Involved in inflammatory response by regulating differentiation of naive CD4(+) T-cells into T-helper Th17: recognizes and binds STAT3 acetylated at 'Lys-87', promoting STAT3 recruitment to chromatin. In addition to acetylated lysines, also recognizes and binds lysine residues on histones that are both methylated and acetylated on the same side chain to form N6-acetyl-N6-methyllysine (Kacme), an epigenetic mark of active chromatin associated with increased transcriptional initiation. Specifically binds histone H4 acetyl-methylated at 'Lys-5' and 'Lys-12' (H4K5acme and H4K12acme, respectively). The polypeptide is Bromodomain-containing protein 2 (BRD2) (Canis lupus familiaris (Dog)).